We begin with the raw amino-acid sequence, 711 residues long: Glycine--tRNA ligase beta subunit (711 aa).

The protein belongs to the class-II aminoacyl-tRNA synthetase family. In terms of assembly, tetramer of two alpha and two beta subunits.

It is found in the cytoplasm. The enzyme catalyses tRNA(Gly) + glycine + ATP = glycyl-tRNA(Gly) + AMP + diphosphate. The polypeptide is Glycine--tRNA ligase beta subunit (Polaromonas naphthalenivorans (strain CJ2)).